We begin with the raw amino-acid sequence, 319 residues long: Coiled-coil domain-containing protein 149 (319 aa).

Coiled coils occupy residues 1 to 199 (MANQ…RKNS) and 259 to 286 (IQHQRQTNKILGNRVAELEKKLRTLEVS). A helical transmembrane segment spans residues 298–318 (VSIGFGSMFFLKYLCLWLIAV).

Belongs to the CCDC149 family.

The protein resides in the membrane. This Bos taurus (Bovine) protein is Coiled-coil domain-containing protein 149 (CCDC149).